A 363-amino-acid chain; its full sequence is Heme A synthase (363 aa).

The next 8 membrane-spanning stretches (helical) occupy residues 21–41 (ALVRGWLYVVLLVLFALVLVG), 107–127 (RLLARSVGLVFALPLLFFWVS), 138–158 (LVGILLLGGLQGAIGWWMVAS), 174–194 (HLTLAALIFTATMVVARGLAP), 207–227 (LAGFIVLLALIQIYLGGLVAG), 268–288 (FVHRLGAYTVFAVALWHMIAT), 301–321 (ATLLFVLVLVQASIGIGTLLM), and 323–343 (VPLHMALTHQGFALIVLGFAA). H270 is a binding site for heme. H331 provides a ligand contact to heme.

The protein belongs to the COX15/CtaA family. Type 2 subfamily. Interacts with CtaB. Requires heme b as cofactor.

Its subcellular location is the cell membrane. The catalysed reaction is Fe(II)-heme o + 2 A + H2O = Fe(II)-heme a + 2 AH2. It functions in the pathway porphyrin-containing compound metabolism; heme A biosynthesis; heme A from heme O: step 1/1. Functionally, catalyzes the conversion of heme O to heme A by two successive hydroxylations of the methyl group at C8. The first hydroxylation forms heme I, the second hydroxylation results in an unstable dihydroxymethyl group, which spontaneously dehydrates, resulting in the formyl group of heme A. This is Heme A synthase from Mesorhizobium japonicum (strain LMG 29417 / CECT 9101 / MAFF 303099) (Mesorhizobium loti (strain MAFF 303099)).